The following is a 473-amino-acid chain: LETM1 domain-containing protein mdm28, mitochondrial (473 aa).

A mitochondrion-targeting transit peptide spans 1–73 (MLRNRLFKTP…FYNIGSSRLY (73 aa)). Residues 74–161 (STETPTPSKV…LTRTLKDIGR (88 aa)) are Mitochondrial intermembrane-facing. The helical transmembrane segment at 162-182 (LVPFSVFVVVPFAELLLPIAV) threads the bilayer. The Mitochondrial matrix segment spans residues 183 to 473 (KLFPNLLPST…ESNIPKNERK (291 aa)). Residues 205–398 (QLRKTRNEVS…LQDTLASIPD (194 aa)) form the Letm1 RBD domain. The interval 430–473 (EEEAEHVAEHPDLAKKQTEENKATSKPAVSAKSPESNIPKNERK) is disordered. Basic and acidic residues predominate over residues 434 to 452 (EHVAEHPDLAKKQTEENKA). A compositionally biased stretch (polar residues) spans 462 to 473 (SPESNIPKNERK).

It localises to the mitochondrion inner membrane. Its function is as follows. Involved in mitochondrial potassium homeostasis through the mitochondrial K(+)/H(+) exchange regulation. This is LETM1 domain-containing protein mdm28, mitochondrial (mdm28) from Schizosaccharomyces pombe (strain 972 / ATCC 24843) (Fission yeast).